Consider the following 315-residue polypeptide: Protoheme IX farnesyltransferase 1 (315 aa).

9 helical membrane-spanning segments follow: residues 25 to 45 (PGII…AAKG), 49 to 69 (LALM…GCAV), 87 to 107 (RVTV…LALG), 120 to 139 (ALAL…VYSL), 145 to 165 (SVYG…VGYC), 176 to 196 (AILL…IAIF), 220 to 240 (LHIV…PLAG), 242 to 262 (TGIA…AMAL), and 280 to 300 (GFSI…SQVI).

This sequence belongs to the UbiA prenyltransferase family. Protoheme IX farnesyltransferase subfamily.

Its subcellular location is the cell inner membrane. The catalysed reaction is heme b + (2E,6E)-farnesyl diphosphate + H2O = Fe(II)-heme o + diphosphate. Its pathway is porphyrin-containing compound metabolism; heme O biosynthesis; heme O from protoheme: step 1/1. Functionally, converts heme B (protoheme IX) to heme O by substitution of the vinyl group on carbon 2 of heme B porphyrin ring with a hydroxyethyl farnesyl side group. The sequence is that of Protoheme IX farnesyltransferase 1 from Shewanella sp. (strain W3-18-1).